The following is a 256-amino-acid chain: Inner membrane transport permease YadH (256 aa).

Over 1–22 the chain is Periplasmic; it reads MMHLYWVALKSIWAKEIHRFMR. Residues 22 to 251 form the ABC transmembrane type-2 domain; that stretch reads RIWVQTLVPP…LICWSLIQRG (230 aa). A helical membrane pass occupies residues 23 to 43; that stretch reads IWVQTLVPPVITMTLYFIIFG. At 44–52 the chain is on the cytoplasmic side; sequence NLIGSRIGD. The chain crosses the membrane as a helical span at residues 53–73; the sequence is MHGFSYMQFIVPGLIMMSVIT. Over 74–94 the chain is Periplasmic; sequence NAYANVASSFFGAKFQRNIEE. The chain crosses the membrane as a helical span at residues 95-115; it reads LLVAPVPTHVIIAGYVGGGVA. R116 is a topological domain (cytoplasmic). The chain crosses the membrane as a helical span at residues 117–137; sequence GLFVGILVTAISLFFVPFQVH. S138 is a topological domain (periplasmic). A helical membrane pass occupies residues 139–159; sequence WVFVALTLVLTAVLFSLAGLL. Residues 160–169 lie on the Cytoplasmic side of the membrane; that stretch reads NGVFAKTFDD. A helical membrane pass occupies residues 170–190; that stretch reads ISLVPTFVLTPLTYLGGVFYS. Topologically, residues 191-223 are periplasmic; that stretch reads LTLLPPFWQGLSHLNPIVYMISGFRYGFLGIND. A helical membrane pass occupies residues 224 to 244; it reads VPLVTTFGVLVVFIVAFYLIC. Over 245 to 256 the chain is Cytoplasmic; that stretch reads WSLIQRGRGLRS.

Belongs to the ABC-2 integral membrane protein family.

It localises to the cell inner membrane. In Escherichia coli O157:H7, this protein is Inner membrane transport permease YadH (yadH).